The sequence spans 80 residues: Translation initiation factor IF-1 (80 aa).

Residues 6–80 form the S1-like domain; it reads RKQEHEKERG…LTRGRIVYRL (75 aa).

The protein belongs to the IF-1 family. As to quaternary structure, component of the 30S ribosomal translation pre-initiation complex which assembles on the 30S ribosome in the order IF-2 and IF-3, IF-1 and N-formylmethionyl-tRNA(fMet); mRNA recruitment can occur at any time during PIC assembly.

Its subcellular location is the cytoplasm. One of the essential components for the initiation of protein synthesis. Stabilizes the binding of IF-2 and IF-3 on the 30S subunit to which N-formylmethionyl-tRNA(fMet) subsequently binds. Helps modulate mRNA selection, yielding the 30S pre-initiation complex (PIC). Upon addition of the 50S ribosomal subunit IF-1, IF-2 and IF-3 are released leaving the mature 70S translation initiation complex. The chain is Translation initiation factor IF-1 from Aquifex aeolicus (strain VF5).